Consider the following 424-residue polypeptide: S-adenosylmethionine synthase (424 aa).

His-14 is a binding site for ATP. Position 16 (Asp-16) interacts with Mg(2+). Glu-42 lines the K(+) pocket. Residues Glu-55 and Gln-98 each coordinate L-methionine. The flexible loop stretch occupies residues 98–108 (QSNDISRGIER). Residues 165-167 (DAK), 242-243 (KF), Asp-251, 257-258 (RK), Ala-274, and Lys-278 contribute to the ATP site. Residue Asp-251 participates in L-methionine binding. Lys-282 lines the L-methionine pocket.

This sequence belongs to the AdoMet synthase family. As to quaternary structure, homotetramer; dimer of dimers. Requires Mg(2+) as cofactor. It depends on K(+) as a cofactor.

The protein resides in the cytoplasm. The catalysed reaction is L-methionine + ATP + H2O = S-adenosyl-L-methionine + phosphate + diphosphate. The protein operates within amino-acid biosynthesis; S-adenosyl-L-methionine biosynthesis; S-adenosyl-L-methionine from L-methionine: step 1/1. Functionally, catalyzes the formation of S-adenosylmethionine (AdoMet) from methionine and ATP. The overall synthetic reaction is composed of two sequential steps, AdoMet formation and the subsequent tripolyphosphate hydrolysis which occurs prior to release of AdoMet from the enzyme. The polypeptide is S-adenosylmethionine synthase (Azobacteroides pseudotrichonymphae genomovar. CFP2).